The sequence spans 1979 residues: Myosin-11 (1979 aa).

Ser2 bears the Blocked amino end (Ser) mark. The Myosin N-terminal SH3-like domain occupies 30–80; sequence SAKKLVWVPSEKHGFEAASIKEEKGDEVTVELQENGKKVTLSKDDIQKMNP. Residues 84–789 form the Myosin motor domain; it reads SKVEDMAELT…VLAHLEEERD (706 aa). Lys128 carries the post-translational modification N6,N6,N6-trimethyllysine. Position 177–184 (177–184) interacts with ATP; the sequence is GESGAGKT. Actin-binding stretches follow at residues 667-689 and 768-782; these read LTKL…IPNH and RIGQ…GVLA. Positions 792–821 constitute an IQ domain; it reads ITDVIIAFQAQCRGYLARKAFAKRQQQLTA. The rodlike tail (S2 and LMM domains) stretch occupies residues 850-1979; it reads LLQVTRQEEE…DGDFNGKASE (1130 aa). The stretch at 850-1979 forms a coiled coil; sequence LLQVTRQEEE…DGDFNGKASE (1130 aa). Disordered stretches follow at residues 1130 to 1150, 1709 to 1736, and 1891 to 1979; these read QEDL…KRDL, RKQA…LQDE, and QLEE…KASE. Over residues 1135–1150 the composition is skewed to basic and acidic residues; that stretch reads SEKAARNKAEKQKRDL. The segment covering 1968-1979 has biased composition (basic and acidic residues); that stretch reads GRDGDFNGKASE.

This sequence belongs to the TRAFAC class myosin-kinesin ATPase superfamily. Myosin family. As to quaternary structure, muscle myosin is a hexameric protein that consists of 2 heavy chain subunits (MHC), 2 alkali light chain subunits (MLC) and 2 regulatory light chain subunits (MLC-2).

It is found in the cytoplasm. Its subcellular location is the myofibril. Its function is as follows. Muscle contraction. The sequence is that of Myosin-11 (MYH11) from Gallus gallus (Chicken).